The following is a 683-amino-acid chain: U4/U6 small nuclear ribonucleoprotein Prp3 (683 aa).

One can recognise a PWI domain in the interval 1–87 (MALSKRELDE…HSKSSSDRSR (87 aa)). The span at 73–107 (GRSSRHSKSSSDRSRKRELKEVFGDDSEISKESSG) shows a compositional bias: basic and acidic residues. The segment at 73-135 (GRSSRHSKSS…IPGPPSESPG (63 aa)) is disordered. Residue Lys-139 forms a Glycyl lysine isopeptide (Lys-Gly) (interchain with G-Cter in SUMO2) linkage. Positions 153-183 (IEERKKQLSFISPPTPQPKTPSSSQPERLPI) are disordered. Ser-164 carries the post-translational modification Phosphoserine. Thr-167 bears the Phosphothreonine mark. Residues Lys-244 and Lys-252 each participate in a glycyl lysine isopeptide (Lys-Gly) (interchain with G-Cter in SUMO2) cross-link. Residues 416-550 (NLVEHPAQLN…VHISVYRVRN (135 aa)) form a mediates interaction with SART3 region. At Ser-619 the chain carries Phosphoserine.

Component of the precatalytic spliceosome (spliceosome B complex). Component of the U4/U6-U5 tri-snRNP complex, a building block of the precatalytic spliceosome (spliceosome B complex). The U4/U6-U5 tri-snRNP complex is composed of the U4, U6 and U5 snRNAs and at least PRPF3, PRPF4, PRPF6, PRPF8, PRPF31, SNRNP200, TXNL4A, SNRNP40, SNRPB, SNRPD1, SNRPD2, SNRPD3, SNRPE, SNRPF, SNRPG, DDX23, CD2BP2, PPIH, SNU13, EFTUD2, SART1 and USP39, plus LSM2, LSM3, LSM4, LSM5, LSM6, LSM7 and LSM8. Interacts directly with PRPF4. Part of a heteromeric complex containing PPIH, PRPF3 and PRPF4 that is stable in the absence of RNA. Interacts with SART3; the interaction is direct and recruits the deubiquitinase USP4 to PRPF3. Interacts with PRPF19. Interacts ('Lys-63'-linked polyubiquitinated) with PRPF8 (via the MPN (JAB/Mov34) domain); may stabilize the U4/U6-U5 tri-snRNP complex. Interacts with ERCC6. Post-translationally, ubiquitinated. Undergoes 'Lys-63'-linked polyubiquitination by PRPF19 and deubiquitination by USP4. 'Lys-63'-linked ubiquitination increases the affinity for PRPF8 and may regulate the assembly of the U4/U6-U5 tri-snRNP complex. In terms of tissue distribution, highly expressed in retina, liver, kidney and blood. Detected at lower levels in heart and brain.

It is found in the nucleus. The protein localises to the nucleus speckle. Plays a role in pre-mRNA splicing as component of the U4/U6-U5 tri-snRNP complex that is involved in spliceosome assembly, and as component of the precatalytic spliceosome (spliceosome B complex). The polypeptide is U4/U6 small nuclear ribonucleoprotein Prp3 (PRPF3) (Homo sapiens (Human)).